The sequence spans 356 residues: Tyrosine recombinase XerS (356 aa).

The Core-binding (CB) domain maps to Leu16–Thr121. One can recognise a Tyr recombinase domain in the interval Glu169–Asp354. Catalysis depends on residues Arg210, Lys234, His306, Arg309, and His332. The active-site O-(3'-phospho-DNA)-tyrosine intermediate is the Tyr341.

It belongs to the 'phage' integrase family. XerS subfamily.

The protein localises to the cytoplasm. Its activity is regulated as follows. FtsK is required for recombination. Site-specific tyrosine recombinase, which acts by catalyzing the cutting and rejoining of the recombining DNA molecules. Essential to convert dimers of the bacterial chromosome into monomers to permit their segregation at cell division. This Streptococcus mutans serotype c (strain ATCC 700610 / UA159) protein is Tyrosine recombinase XerS.